Here is a 66-residue protein sequence, read N- to C-terminus: Alpha-actitoxin-Ms11a-1 (66 aa).

A signal peptide spans 1–24 (MASKIFFVLAVFLVMSAVLPESFA). 3 disulfide bridges follow: cysteine 26–cysteine 41, cysteine 33–cysteine 46, and cysteine 40–cysteine 61.

It localises to the secreted. Its subcellular location is the nematocyst. Functionally, alpha-toxins act on postsynaptic membranes, they bind to the nicotinic acetylcholine receptors (nAChR) and thus inhibit them. This toxin competes with alpha-bungarotoxin for binding to orthosteric sites on muscle-type T.carlifornicus (IC(50)=408 nM) and human alpha-7/CHRNA7 nAChRs (IC(50)=14.16 uM). The sequence is that of Alpha-actitoxin-Ms11a-1 from Metridium senile (Brown sea anemone).